The primary structure comprises 292 residues: MTTTEEALTFESTSKFAQVRPHLKLHYHEAGVGNDTTIVLLHGGGPGASSWSNFARNIPVLAEKFHVLAVDQPGYGLSDKPTEHPQYFVHSASALKDLLDTLGVGGRVHLLGNSLGGGAAVRFALDYPDRAGRLVLMGPGGLSVNLFAPDPTEGVKNLGKFGYQPTRENLEAFLRIMVFDQKLITDELIDERFAAASTPESLAAAKAMGKSFSSADFELGMLWRDAYKLRQRVLLIWGREDRVNPLDGALVALKMIPRAQLHVFGGCGHWAQLEKFDEFNRLATDFLLDGGK.

Residues 44-45 (GG), Asn53, Asn113, and Arg192 contribute to the substrate site. Residue His269 is the Proton acceptor of the active site. Trp270 provides a ligand contact to substrate.

Belongs to the AB hydrolase superfamily. HsaD family. Homodimer.

It carries out the reaction (1E,2Z)-3-hydroxy-5,9,17-trioxo-4,5:9,10-disecoandrosta-1(10),2-dien-4-oate + H2O = 3-[(3aS,4S,7aS)-7a-methyl-1,5-dioxo-octahydro-1H-inden-4-yl]propanoate + (2Z,4Z)-2-hydroxyhexa-2,4-dienoate + H(+). Its pathway is lipid metabolism; steroid biosynthesis. In terms of biological role, catalyzes the hydrolysis of a carbon-carbon bond in 4,5: 9,10-diseco-3-hydroxy-5,9,17-trioxoandrosta-1(10),2-diene-4-oate (4,9-DSHA) to yield 9,17-dioxo-1,2,3,4,10,19-hexanorandrostan-5-oate (DOHNAA) and 2-hydroxy-hexa-2,4-dienoate (HHD). Also involved in biphenyl and polychlorinated biphenyls (PCBs) degradation. This Rhodococcus jostii (strain RHA1) protein is 4,5:9,10-diseco-3-hydroxy-5,9,17-trioxoandrosta-1(10),2-diene-4-oate hydrolase (hsaD).